Consider the following 584-residue polypeptide: Major capsid protein (584 aa).

The protein belongs to the NCLDV major capsid protein family.

Its subcellular location is the virion. In terms of biological role, major protein of the capsid. This is Major capsid protein (MCP) from Haptolina ericina (CeV01).